We begin with the raw amino-acid sequence, 750 residues long: Photosystem I P700 chlorophyll a apoprotein A1 (750 aa).

The next 8 helical transmembrane spans lie at 70-93 (VFSAHFGQLSIIFLWLSGMYFHGA), 156-179 (LYCTAIGALVFAGLMLFAGWFHYH), 195-219 (LNHHLAGLLGLGSLSWAGHQVHVSL), 291-309 (IVHHHLAIAILFLIAGHMY), 346-369 (WHAQLSLNLAMLGSLTIVVAHHMY), 385-411 (LSLFTHHMWIGGFLIVGAAAHAAIFMV), 433-455 (AIISHLNWACIFLGFHSFGLYIH), and 531-549 (FLVHHIHAFTIHVTVLILL). Positions 573 and 582 each coordinate [4Fe-4S] cluster. The next 2 membrane-spanning stretches (helical) occupy residues 589 to 610 (HVFLGLFWMYNAISVVIFHFSW) and 664 to 686 (LSAYGLFFLGAHFVWAFSLMFLF). Position 675 (His675) interacts with chlorophyll a'. The chlorophyll a site is built by Met683 and Tyr691. Residue Trp692 participates in phylloquinone binding. A helical transmembrane segment spans residues 724–744 (AVGVTHYLLGGIATTWAFFLA).

The protein belongs to the PsaA/PsaB family. In terms of assembly, the PsaA/B heterodimer binds the P700 chlorophyll special pair and subsequent electron acceptors. PSI consists of a core antenna complex that captures photons, and an electron transfer chain that converts photonic excitation into a charge separation. The eukaryotic PSI reaction center is composed of at least 11 subunits. Requires P700 is a chlorophyll a/chlorophyll a' dimer, A0 is one or more chlorophyll a, A1 is one or both phylloquinones and FX is a shared 4Fe-4S iron-sulfur center. as cofactor.

It localises to the plastid. The protein resides in the chloroplast thylakoid membrane. It catalyses the reaction reduced [plastocyanin] + hnu + oxidized [2Fe-2S]-[ferredoxin] = oxidized [plastocyanin] + reduced [2Fe-2S]-[ferredoxin]. In terms of biological role, psaA and PsaB bind P700, the primary electron donor of photosystem I (PSI), as well as the electron acceptors A0, A1 and FX. PSI is a plastocyanin-ferredoxin oxidoreductase, converting photonic excitation into a charge separation, which transfers an electron from the donor P700 chlorophyll pair to the spectroscopically characterized acceptors A0, A1, FX, FA and FB in turn. Oxidized P700 is reduced on the lumenal side of the thylakoid membrane by plastocyanin. This chain is Photosystem I P700 chlorophyll a apoprotein A1, found in Piper cenocladum (Ant piper).